The primary structure comprises 2234 residues: RNA-directed RNA polymerase L (2234 aa).

The tract at residues 26-283 (ITVVTSQTEM…INLSDEKLSC (258 aa)) is endonuclease. Mn(2+)-binding residues include E51, D89, and E102. K115 is a catalytic residue. Positions 879 to 891 (KRDDHMKDSEDSK) are enriched in basic and acidic residues. Disordered regions lie at residues 879-898 (KRDD…SSDL) and 927-949 (KLKE…QQKR). Residues 935–945 (RQSSSGSSLKN) show a composition bias toward polar residues. A RdRp catalytic domain is found at 1184–1383 (MEMKMSVNLG…FISSKFNKFV (200 aa)). D1342 serves as a coordination point for Mg(2+).

The protein belongs to the Bunyavirales RNA polymerase family. Homomultimer; the oligomeric structure is essential for the polymerase activity. Interacts with nucleoprotein N. Interacts with protein Z; this interaction inhibits viral transcription and replication, Z partially blocks the product exit tunnel for the releasing nascent RNA product. Requires Mn(2+) as cofactor. Mg(2+) is required as a cofactor.

Its subcellular location is the virion. It is found in the host cytoplasm. The enzyme catalyses RNA(n) + a ribonucleoside 5'-triphosphate = RNA(n+1) + diphosphate. In terms of biological role, RNA-dependent RNA polymerase, which is responsible for the replication and transcription of the viral RNA genome using antigenomic RNA as an intermediate. During transcription, synthesizes subgenomic RNAs and assures their capping by a cap-snatching mechanism, which involves the endonuclease activity cleaving the host capped pre-mRNAs. These short capped RNAs are then used as primers for viral transcription. The 3'-end of subgenomic mRNAs molecules are heterogeneous and not polyadenylated. The replicase function is to direct synthesis of antigenomic and genomic RNA which are encapsidated and non capped. As a consequence of the use of the same enzyme for both transcription and replication, these mechanisms need to be well coordinated. These processes may be regulated by proteins N and Z in a dose-dependent manner. Z protein inhibits the viral polymerase L und thus the viral transcription and RNA synthesis. The protein is RNA-directed RNA polymerase L of Bolomys (OLVV).